The primary structure comprises 161 residues: MTMVGLIWAQATSGVIGRGGDIPWRLPEDQAHFREITMGHTIVMGRRTWDSLPAKVRPLPGRRNVVLSRQADFMASGAEVVGSLEEALTSPETWVIGGGQVYALALPYATRCEVTEVDIGLPREAGDALAPVLDETWRGETGEWRFSRSGLRYRLYSYHRS.

The region spanning 1 to 160 is the DHFR domain; that stretch reads MTMVGLIWAQ…LRYRLYSYHR (160 aa). Residue 7–9 coordinates substrate; the sequence is IWA. Residues 8–9 and 16–21 each bind NADP(+); these read WA and IGRGGD. The substrate site is built by D29 and R34. 45 to 48 contributes to the NADP(+) binding site; it reads GRRT. Residue R62 participates in substrate binding. Residues 67 to 70, G82, and 96 to 101 contribute to the NADP(+) site; these read LSRQ and IGGGQV. Substrate-binding residues include Y102 and T115.

This sequence belongs to the dihydrofolate reductase family.

It catalyses the reaction (6S)-5,6,7,8-tetrahydrofolate + NADP(+) = 7,8-dihydrofolate + NADPH + H(+). It functions in the pathway cofactor biosynthesis; tetrahydrofolate biosynthesis; 5,6,7,8-tetrahydrofolate from 7,8-dihydrofolate: step 1/1. Key enzyme in folate metabolism. Catalyzes an essential reaction for de novo glycine and purine synthesis, and for DNA precursor synthesis. This chain is Dihydrofolate reductase (folA), found in Mycobacterium tuberculosis (strain CDC 1551 / Oshkosh).